The following is a 193-amino-acid chain: Dual-action ribosomal maturation protein DarP (193 aa).

A compositionally biased stretch (basic and acidic residues) spans 1-10 (MRGRDEETGE). Disordered regions lie at residues 1 to 20 (MRGRDEETGEFRGASRSQQR) and 171 to 193 (QEQGLESGDSELEDGESASEDDE). Over residues 178 to 193 (GDSELEDGESASEDDE) the composition is skewed to acidic residues.

It belongs to the DarP family.

Its subcellular location is the cytoplasm. In terms of biological role, member of a network of 50S ribosomal subunit biogenesis factors which assembles along the 30S-50S interface, preventing incorrect 23S rRNA structures from forming. Promotes peptidyl transferase center (PTC) maturation. The polypeptide is Dual-action ribosomal maturation protein DarP (Xanthomonas axonopodis pv. citri (strain 306)).